The primary structure comprises 558 residues: Glucose-6-phosphate isomerase (558 aa).

Glutamate 362 functions as the Proton donor in the catalytic mechanism. Active-site residues include histidine 393 and lysine 523.

It belongs to the GPI family.

It localises to the cytoplasm. It carries out the reaction alpha-D-glucose 6-phosphate = beta-D-fructose 6-phosphate. The protein operates within carbohydrate degradation; glycolysis; D-glyceraldehyde 3-phosphate and glycerone phosphate from D-glucose: step 2/4. The sequence is that of Glucose-6-phosphate isomerase (Pgi) from Drosophila yakuba (Fruit fly).